The primary structure comprises 563 residues: Probable ganciclovir kinase (563 aa).

A compositionally biased stretch (polar residues) spans 1-16; that stretch reads MDNGVETPQGQKTQPI. The interval 1–33 is disordered; sequence MDNGVETPQGQKTQPINLPPDRKRLRKHDGLGK. ATP is bound by residues 202 to 210 and K219; that span reads LGVGAYGKV. D314 functions as the Proton acceptor in the catalytic mechanism.

It belongs to the protein kinase superfamily. Tyr protein kinase family. HCMV ganciclovir subfamily.

Functionally, phosphorylates the antiviral nucleoside analog ganciclovir. In Human herpesvirus 6B (strain Z29) (HHV-6 variant B), this protein is Probable ganciclovir kinase (U69).